The chain runs to 860 residues: Leucine--tRNA ligase (860 aa).

A 'HIGH' region motif is present at residues 42–52 (PYPSGRLHMGH). The short motif at 619–623 (KMSKS) is the 'KMSKS' region element. An ATP-binding site is contributed by K622.

It belongs to the class-I aminoacyl-tRNA synthetase family.

It localises to the cytoplasm. It catalyses the reaction tRNA(Leu) + L-leucine + ATP = L-leucyl-tRNA(Leu) + AMP + diphosphate. This is Leucine--tRNA ligase from Mannheimia succiniciproducens (strain KCTC 0769BP / MBEL55E).